We begin with the raw amino-acid sequence, 238 residues long: Probable 2-phosphosulfolactate phosphatase (238 aa).

The protein belongs to the ComB family. Mg(2+) serves as cofactor.

It carries out the reaction (2R)-O-phospho-3-sulfolactate + H2O = (2R)-3-sulfolactate + phosphate. The polypeptide is Probable 2-phosphosulfolactate phosphatase (Carboxydothermus hydrogenoformans (strain ATCC BAA-161 / DSM 6008 / Z-2901)).